The sequence spans 732 residues: MSAETSTTPAPAENTNGTPDNAPAPEVTAVEAPATTSQPHSASLYVGELDPSVTEAMLYELFSSIGQVASIRVCRDAVTRRSLGYAYVNYNDTAHGERALDELNYTLIKGKPCRIMWSQRDPALRKTGQGNVFIKNLDSAIDNKALHDTFAAFGNILSCKVAQDEFGVSKGYGFVHYETAEAANNAIKHVNGMLLNDKKVFVGHHISKKDRQSKFEEMKANFTNIYIKNIDPEVEDEEFRKLFEKFGEITSATLSRDSEGKSRGFGFVNFSTHESAQAAVEEMNDKEVRSQKLYVGRAQKKHEREEELRKQYEAARMEKASKYQGVNLYVKNLTDDVDDDKLRELFGPYGTITSAKVMRDTAPVETATPESETKESANKENEKAAEGEKEPAAEEKEKEEKKEAEQKPEKKPLGKSKGFGFVCFSSPDEASKAVTEMNQRMVNGKPLYVALAQRKDVRRSQLEASIQARNNIRQQQAAAAAGMGQAYMAPAVFYGPGQQGFIPGAQRGGMFPPQPGMMMGMPGRPGQYPGPFPGQQGGRGVGPNQQIPPNFQGLPMGAMQGPGIPNGMGYPMVQGQFGGGRGRGQVPGMGGPMRGGYGGGRGGVPLGGQMRPGQGGRGQAVGQPGPETPVGVLTAQALSAAPPQQQKQMLGEALYPKIQATQPELAGKITGMLLEMDNTELLGLLEDDEALRAKVDEALSVYDEYMKNKSDEPAAEKPKEAAQEAPAEENKA.

A compositionally biased stretch (polar residues) spans 1-19; sequence MSAETSTTPAPAENTNGTP. The tract at residues 1–26 is disordered; sequence MSAETSTTPAPAENTNGTPDNAPAPE. 4 RRM domains span residues 42-120, 130-207, 223-300, and 326-454; these read ASLY…WSQR, GNVF…HHIS, TNIY…RAQK, and VNLY…LAQR. 2 disordered regions span residues 357 to 413 and 706 to 732; these read VMRD…KKPL and MKNK…ENKA. Residues 371 to 412 are compositionally biased toward basic and acidic residues; that stretch reads SETKESANKENEKAAEGEKEPAAEEKEKEEKKEAEQKPEKKP. The PABC domain maps to 630 to 707; sequence VGVLTAQALS…ALSVYDEYMK (78 aa).

This sequence belongs to the polyadenylate-binding protein type-1 family.

Its subcellular location is the cytoplasm. The protein localises to the nucleus. In terms of biological role, binds the poly(A) tail of mRNA. Appears to be an important mediator of the multiple roles of the poly(A) tail in mRNA biogenesis, stability and translation. In the nucleus, involved in both mRNA cleavage and polyadenylation. Is also required for efficient mRNA export to the cytoplasm. Acts in concert with a poly(A)-specific nuclease (PAN) to affect poly(A) tail shortening, which may occur concomitantly with either nucleocytoplasmic mRNA transport or translational initiation. In the cytoplasm, stimulates translation initiation and regulates mRNA decay through translation termination-coupled poly(A) shortening, probably mediated by PAN. The sequence is that of Polyadenylate-binding protein, cytoplasmic and nuclear (pab1) from Emericella nidulans (strain FGSC A4 / ATCC 38163 / CBS 112.46 / NRRL 194 / M139) (Aspergillus nidulans).